The primary structure comprises 217 residues: Phosphatidylserine decarboxylase proenzyme (217 aa).

S182 functions as the Schiff-base intermediate with substrate; via pyruvic acid in the catalytic mechanism. S182 is subject to Pyruvic acid (Ser); by autocatalysis.

It belongs to the phosphatidylserine decarboxylase family. PSD-A subfamily. Heterodimer of a large membrane-associated beta subunit and a small pyruvoyl-containing alpha subunit. The cofactor is pyruvate. Post-translationally, is synthesized initially as an inactive proenzyme. Formation of the active enzyme involves a self-maturation process in which the active site pyruvoyl group is generated from an internal serine residue via an autocatalytic post-translational modification. Two non-identical subunits are generated from the proenzyme in this reaction, and the pyruvate is formed at the N-terminus of the alpha chain, which is derived from the carboxyl end of the proenzyme. The post-translation cleavage follows an unusual pathway, termed non-hydrolytic serinolysis, in which the side chain hydroxyl group of the serine supplies its oxygen atom to form the C-terminus of the beta chain, while the remainder of the serine residue undergoes an oxidative deamination to produce ammonia and the pyruvoyl prosthetic group on the alpha chain.

It localises to the cell membrane. The enzyme catalyses a 1,2-diacyl-sn-glycero-3-phospho-L-serine + H(+) = a 1,2-diacyl-sn-glycero-3-phosphoethanolamine + CO2. Its pathway is phospholipid metabolism; phosphatidylethanolamine biosynthesis; phosphatidylethanolamine from CDP-diacylglycerol: step 2/2. Catalyzes the formation of phosphatidylethanolamine (PtdEtn) from phosphatidylserine (PtdSer). This is Phosphatidylserine decarboxylase proenzyme from Prosthecochloris aestuarii (strain DSM 271 / SK 413).